Reading from the N-terminus, the 457-residue chain is Phosphoglucosamine mutase (457 aa).

The Phosphoserine intermediate role is filled by Ser109. Mg(2+) contacts are provided by Ser109, Asp251, Asp253, and Asp255. Phosphoserine is present on Ser109.

Belongs to the phosphohexose mutase family. Mg(2+) is required as a cofactor. Activated by phosphorylation.

The enzyme catalyses alpha-D-glucosamine 1-phosphate = D-glucosamine 6-phosphate. Functionally, catalyzes the conversion of glucosamine-6-phosphate to glucosamine-1-phosphate. In Bdellovibrio bacteriovorus (strain ATCC 15356 / DSM 50701 / NCIMB 9529 / HD100), this protein is Phosphoglucosamine mutase.